A 291-amino-acid chain; its full sequence is ATP synthase gamma chain (291 aa).

The protein belongs to the ATPase gamma chain family. In terms of assembly, F-type ATPases have 2 components, CF(1) - the catalytic core - and CF(0) - the membrane proton channel. CF(1) has five subunits: alpha(3), beta(3), gamma(1), delta(1), epsilon(1). CF(0) has three main subunits: a, b and c.

It localises to the cell membrane. Produces ATP from ADP in the presence of a proton gradient across the membrane. The gamma chain is believed to be important in regulating ATPase activity and the flow of protons through the CF(0) complex. The sequence is that of ATP synthase gamma chain from Streptococcus pyogenes serotype M1.